Here is a 217-residue protein sequence, read N- to C-terminus: Nucleolar protein 12 (217 aa).

Residues glycine 34–glutamine 98 are a coiled coil. The interval leucine 122–glutamate 217 is disordered. Positions glycine 130 to serine 141 are enriched in acidic residues. Basic residues-rich tracts occupy residues alanine 172 to arginine 184 and lysine 201 to glutamate 217.

Belongs to the RRP17 family. In terms of assembly, interacts with KIAA1191. In terms of tissue distribution, expressed in brain, lung, spleen, kidney and heart.

The protein resides in the nucleus. It localises to the nucleolus. Its subcellular location is the cytoplasm. Multifunctional RNA binding protein that plays a role in RNA metabolism and DNA maintenance. Participates in the resolution of DNA stress and the maintenance of genome integrity by localizing to sites of DNA insults. Also plays a role in proper nucleolar organization by limiting nucleolar size and regulating nucleolar number. Mechanistically, regulates the nucleolar levels of fibrillarin and nucleolin, two key players in pre-rRNA processing and ribosome assembly. This is Nucleolar protein 12 (Nol12) from Mus musculus (Mouse).